Reading from the N-terminus, the 301-residue chain is Probable alpha-L-glutamate ligase (301 aa).

Residues 104–287 form the ATP-grasp domain; the sequence is LQLLSRRGIG…VAGIIIEHLE (184 aa). Residues K141, 178-179, D187, and 211-213 each bind ATP; these read EY and RSN. Residues D248, E260, and N262 each coordinate Mg(2+). D248, E260, and N262 together coordinate Mn(2+).

Belongs to the RimK family. It depends on Mg(2+) as a cofactor. Requires Mn(2+) as cofactor.

The polypeptide is Probable alpha-L-glutamate ligase (Pseudomonas fluorescens (strain Pf0-1)).